A 196-amino-acid chain; its full sequence is Ribosome maturation factor RimP (196 aa).

The tract at residues 164–196 (LAPQKPNKPGPKKPGHDKKKPSNEPAAGKPRAE) is disordered. Positions 173–182 (GPKKPGHDKK) are enriched in basic residues.

This sequence belongs to the RimP family.

The protein localises to the cytoplasm. Required for maturation of 30S ribosomal subunits. In Xanthomonas campestris pv. campestris (strain B100), this protein is Ribosome maturation factor RimP.